The chain runs to 109 residues: uncharacterized protein (109 aa).

A helical membrane pass occupies residues 82-102 (SLSFLLLLFFYFNNYYFLSMT).

It localises to the membrane. This is an uncharacterized protein from Saccharomyces cerevisiae (strain ATCC 204508 / S288c) (Baker's yeast).